Here is a 116-residue protein sequence, read N- to C-terminus: Secreted RxLR effector protein 9 (116 aa).

A signal peptide spans 1–17; that stretch reads MRLIYIFMVSIVTTLHA. The RxLR-dEER motif lies at 49–64; it reads RILRGTDGNVNREQER.

Belongs to the RxLR effector family.

It is found in the secreted. It localises to the host cytoplasm. The protein resides in the host nucleus. Functionally, effector that acts as a broad suppressor of cell death to interrupt plant immunity. Inhibits cell death induced by cell death-inducing proteins, including the PAMP elicitor INF1 from P.infestans. The polypeptide is Secreted RxLR effector protein 9 (Plasmopara viticola (Downy mildew of grapevine)).